Here is a 453-residue protein sequence, read N- to C-terminus: MFLLQRFFIYGLFLACFYTTVFGEKHFEAEEYRDSFLSQENMNKINHTTIERLFREMTENDPSLLSSSKTLAELSKGELAKAREDLKSVLSFLKNNLPVDTESSSEAFTIEKDNNSCVWLNSVKSFVEKQFSYSSGTNGILATFLTAIPPNIFILLVPKSFDTSMLNLFVAVSAGSLLGDVFLQLLPTVYSTNGGDFPASSVYSILIGALVFFLMDKGIRILIHERPSSLSKPKKDGEETSSVNKPSASSTQTDVKGVEGLRKRNVKDDQNSKGHEPDLIRHVVEEVSEEYNDKTVVYLNLLCDSFHNFMDGLAITSAFFTNTSIGISTTFAVLLHEIPAEIGDLAILLRNGYTKSQVLVLQMITMVTGLLGAIVATYIYTASSSSSPYGSFLLQLEDKLLPFTAGGFLYIAYLGVFPELLEINLSKGKLGNMIYTALYMMFIVGGFSFLYYV.

Residues 1-23 form the signal peptide; sequence MFLLQRFFIYGLFLACFYTTVFG. Residues 24-137 lie on the Lumenal side of the membrane; that stretch reads EKHFEAEEYR…EKQFSYSSGT (114 aa). Residues 138–158 traverse the membrane as a helical segment; that stretch reads NGILATFLTAIPPNIFILLVP. Residues 159–165 are Cytoplasmic-facing; it reads KSFDTSM. The chain crosses the membrane as a helical span at residues 166-186; that stretch reads LNLFVAVSAGSLLGDVFLQLL. The Lumenal portion of the chain corresponds to 187-194; that stretch reads PTVYSTNG. A helical membrane pass occupies residues 195–215; it reads GDFPASSVYSILIGALVFFLM. Residues 216–358 are Cytoplasmic-facing; it reads DKGIRILIHE…LRNGYTKSQV (143 aa). The span at 229–238 shows a compositional bias: basic and acidic residues; that stretch reads SLSKPKKDGE. The tract at residues 229–278 is disordered; that stretch reads SLSKPKKDGEETSSVNKPSASSTQTDVKGVEGLRKRNVKDDQNSKGHEPD. Residues 240-254 are compositionally biased toward polar residues; that stretch reads TSSVNKPSASSTQTD. Over residues 256-278 the composition is skewed to basic and acidic residues; the sequence is KGVEGLRKRNVKDDQNSKGHEPD. A helical transmembrane segment spans residues 359-379; the sequence is LVLQMITMVTGLLGAIVATYI. The Lumenal portion of the chain corresponds to 380–399; sequence YTASSSSSPYGSFLLQLEDK. Residues 400–420 traverse the membrane as a helical segment; that stretch reads LLPFTAGGFLYIAYLGVFPEL. The Cytoplasmic segment spans residues 421 to 432; the sequence is LEINLSKGKLGN. A helical transmembrane segment spans residues 433 to 453; sequence MIYTALYMMFIVGGFSFLYYV.

The protein belongs to the ZIP transporter (TC 2.A.5) family. KE4/Catsup subfamily.

It localises to the endoplasmic reticulum membrane. This is an uncharacterized protein from Schizosaccharomyces pombe (strain 972 / ATCC 24843) (Fission yeast).